The chain runs to 143 residues: Large ribosomal subunit protein uL15 (143 aa).

A disordered region spans residues 1–51 (MELNTIKPASGAKHAKRRVGRGIGSGLGKTAGRGHKGQKSRAGGYHKVGFE). Positions 21–31 (RGIGSGLGKTA) are enriched in gly residues.

The protein belongs to the universal ribosomal protein uL15 family. In terms of assembly, part of the 50S ribosomal subunit.

Functionally, binds to the 23S rRNA. The chain is Large ribosomal subunit protein uL15 from Methylibium petroleiphilum (strain ATCC BAA-1232 / LMG 22953 / PM1).